Reading from the N-terminus, the 446-residue chain is COBRA-like protein 1 (446 aa).

An N-terminal signal peptide occupies residues 1 to 28; it reads MALLLLRMGVSVALLVAFFSSLIPSSEA. Residues asparagine 37, asparagine 162, asparagine 170, asparagine 209, asparagine 234, asparagine 316, asparagine 331, asparagine 350, and asparagine 419 are each glycosylated (N-linked (GlcNAc...) asparagine). Alanine 420 is lipidated: GPI-anchor amidated alanine. Residues 421-446 constitute a propeptide, removed in mature form; that stretch reads STRVMSSILLPFITIWTALTFLMVYA.

The protein belongs to the COBRA family.

The protein resides in the cell membrane. Involved in determining the orientation of cell expansion, probably by playing an important role in cellulose deposition. May act by recruiting cellulose synthesizing complexes to discrete positions on the cell surface. This Oryza sativa subsp. japonica (Rice) protein is COBRA-like protein 1 (BC1L6).